The chain runs to 2110 residues: Protein Ycf2 (2110 aa).

1336-1343 contacts ATP; the sequence is GSIGTGRS. Residues 1852 to 1876 form a disordered region; sequence EEEAELQDEEAELQDEGAGRKDEEA. Residues 1854–1866 show a composition bias toward acidic residues; that stretch reads EAELQDEEAELQD.

The protein belongs to the Ycf2 family.

It is found in the plastid. Its subcellular location is the chloroplast stroma. Probable ATPase of unknown function. Its presence in a non-photosynthetic plant (Epifagus virginiana) and experiments in tobacco indicate that it has an essential function which is probably not related to photosynthesis. The protein is Protein Ycf2 (ycf2-A) of Pelargonium hortorum (Common geranium).